The primary structure comprises 358 residues: Tribbles homolog 3 (358 aa).

Residues 1–54 (MRATPLAAPAGSLSRKKRLELDDNLDTERPVQKRARSGPQPRLPPCLLPLSPPT) form a disordered region. The interval 1 to 127 (MRATPLAAPA…KHVARPTEVL (127 aa)) is interaction with DDIT3/CHOP. Phosphoserine is present on S12. The segment covering 41–54 (PRLPPCLLPLSPPT) has biased composition (pro residues). A Protein kinase domain is found at 68-316 (LGPYVLLEPE…TGILLHPWLR (249 aa)).

This sequence belongs to the protein kinase superfamily. CAMK Ser/Thr protein kinase family. Tribbles subfamily. In terms of assembly, interacts with AKT1, AKT2, MAP2K1 and MAP2K7. Interacts with ATF4. Interacts with DDIT3/CHOP and inhibits its interaction with EP300/P300. Interacts with APOBEC3C. Interacts (via N-terminus) with APOBEC3A. Interacts with RELA. In terms of tissue distribution, highest expression in liver, pancreas, peripheral blood leukocytes and bone marrow. Also highly expressed in a number of primary lung, colon and breast tumors. Expressed in spleen, thymus, and prostate and is undetectable in other examined tissues, including testis, ovary, small intestine, colon, leukocyte, heart, brain, placenta, lung, skeletal muscle, and kidney.

The protein localises to the nucleus. In terms of biological role, inactive protein kinase which acts as a regulator of the integrated stress response (ISR), a process for adaptation to various stress. Inhibits the transcriptional activity of DDIT3/CHOP and is involved in DDIT3/CHOP-dependent cell death during ER stress. May play a role in programmed neuronal cell death but does not appear to affect non-neuronal cells. Acts as a negative feedback regulator of the ATF4-dependent transcription during the ISR: while TRIB3 expression is promoted by ATF4, TRIB3 protein interacts with ATF4 and inhibits ATF4 transcription activity. Disrupts insulin signaling by binding directly to Akt kinases and blocking their activation. May bind directly to and mask the 'Thr-308' phosphorylation site in AKT1. Interacts with the NF-kappa-B transactivator p65 RELA and inhibits its phosphorylation and thus its transcriptional activation activity. Interacts with MAPK kinases and regulates activation of MAP kinases. Can inhibit APOBEC3A editing of nuclear DNA. The chain is Tribbles homolog 3 (TRIB3) from Homo sapiens (Human).